The chain runs to 321 residues: Protein ATP1B4 (321 aa).

Positions Met-1 to Met-41 are disordered. Residues Met-1 to Ser-72 are Cytoplasmic-facing. Positions Gly-14–Met-41 are enriched in basic and acidic residues. A helical transmembrane segment spans residues Trp-73 to Phe-93. Topologically, residues Cys-94–Lys-321 are extracellular. Residues Asn-132, Asn-176, and Asn-193 are each glycosylated (N-linked (GlcNAc...) asparagine). An intrachain disulfide couples Cys-165 to Cys-184. 2 disulfides stabilise this stretch: Cys-194/Cys-210 and Cys-233/Cys-293. Asn-239, Asn-252, and Asn-270 each carry an N-linked (GlcNAc...) asparagine glycan.

This sequence belongs to the X(+)/potassium ATPases subunit beta family. Composed of two subunits: alpha (catalytic) and beta (accessory). In terms of processing, glycosylated. In terms of tissue distribution, expressed in skeletal muscle, intestine, heart, brain, retina, inner ear and skin.

It localises to the membrane. Its function is as follows. This is the non-catalytic component of the active enzyme, which catalyzes the hydrolysis of ATP coupled with the exchange of Na(+) and K(+) ions across the plasma membrane. In Gallus gallus (Chicken), this protein is Protein ATP1B4 (ATP1B4).